We begin with the raw amino-acid sequence, 283 residues long: Elongation factor Ts (283 aa).

The involved in Mg(2+) ion dislocation from EF-Tu stretch occupies residues 84–87 (TDFV).

Belongs to the EF-Ts family.

Its subcellular location is the cytoplasm. In terms of biological role, associates with the EF-Tu.GDP complex and induces the exchange of GDP to GTP. It remains bound to the aminoacyl-tRNA.EF-Tu.GTP complex up to the GTP hydrolysis stage on the ribosome. This is Elongation factor Ts from Bifidobacterium longum subsp. infantis (strain ATCC 15697 / DSM 20088 / JCM 1222 / NCTC 11817 / S12).